We begin with the raw amino-acid sequence, 382 residues long: Gap junction alpha-1 protein (382 aa).

The Cytoplasmic portion of the chain corresponds to 2 to 23; that stretch reads GDWSALGKLLDKVQAYSTAGGK. Residue Ser5 is modified to Phosphoserine. Residues 24-44 traverse the membrane as a helical segment; the sequence is VWLSVLFIFRILLLGTAVESA. The Extracellular portion of the chain corresponds to 45–76; sequence WGDEQSAFRCNTQQPGCENVCYDKSFPISHVR. Intrachain disulfides connect Cys54/Cys192 and Cys187/Cys198. A helical transmembrane segment spans residues 77-97; the sequence is FWVLQIIFVSVPTLLYLAHVF. The Cytoplasmic portion of the chain corresponds to 98–155; that stretch reads YVMRKEEKLNKKEEELKVAQTDGVNVDMHLKQIEIKKFKYGIEEHGKVKMRGGLLRTY. A Glycyl lysine isopeptide (Lys-Gly) (interchain with G-Cter in SUMO) cross-link involves residue Lys144. A helical membrane pass occupies residues 156-176; that stretch reads IISILFKSIFEVAFLLIQWYI. Over 177–207 the chain is Extracellular; it reads YGFSLSAVYTCKRDPCPHQVDCFLSRPTEKT. Residues 208 to 228 form a helical membrane-spanning segment; sequence IFIIFMLVVSLVSLALNIIEL. At 229–382 the chain is on the cytoplasmic side; sequence FYVFFKGVKD…SRPRPDDLEI (154 aa). Lys237 is covalently cross-linked (Glycyl lysine isopeptide (Lys-Gly) (interchain with G-Cter in SUMO)). Positions 244 to 382 are interaction with NOV; it reads SDPYHATSGA…SRPRPDDLEI (139 aa). Tyr247 is subject to Phosphotyrosine. Phosphoserine occurs at positions 255 and 262. The interaction with UBQLN4 stretch occupies residues 264–382; it reads KYAYFNGCSS…SRPRPDDLEI (119 aa). Cys271 bears the S-nitrosocysteine mark. Thr275 carries the phosphothreonine modification. 2 positions are modified to phosphoserine: Ser306 and Ser314. Residues 317–332 show a composition bias toward polar residues; the sequence is QNRMGQAGSTISNSHA. The interval 317 to 382 is disordered; sequence QNRMGQAGST…SRPRPDDLEI (66 aa). The residue at position 325 (Ser325) is a Phosphoserine; by CK1. Position 326 is a phosphothreonine (Thr326). Residues Ser328 and Ser330 each carry the phosphoserine; by CK1 modification. Ser344 and Ser365 each carry phosphoserine. Positions 362–374 are enriched in low complexity; that stretch reads RPSSRASSRASSR. Phosphoserine; by PKC/PRKCG and PKC/PRKCD is present on Ser368. 2 positions are modified to phosphoserine: Ser369 and Ser373.

It belongs to the connexin family. Alpha-type (group II) subfamily. As to quaternary structure, a connexon is composed of a hexamer of connexins. Interacts (via C-terminus) with TJP1. Interacts (via C-terminus) with SRC (via SH3 domain). Interacts (not ubiquitinated) with UBQLN4 (via UBA domain). Interacts with SGSM3 and CNST. Interacts with RIC1/CIP150. Interacts with CSNK1D. Interacts with NOV. Interacts with TMEM65. Interacts with ANK3/ANKG and PKP2. Post-translationally, phosphorylated at Ser-368 by PRKCG; phosphorylation induces disassembly of gap junction plaques and inhibition of gap junction activity. Phosphorylation at Ser-325, Ser-328 and Ser-330 by CK1 modulates gap junction assembly. Phosphorylation at Ser-368 by PRKCD triggers its internalization into small vesicles leading to proteasome-mediated degradation. In terms of processing, sumoylated with SUMO1, SUMO2 and SUMO3, which may regulate the level of functional Cx43 gap junctions at the plasma membrane. May be desumoylated by SENP1 or SENP2. S-nitrosylation at Cys-271 is enriched at the muscle endothelial gap junction in arteries, it augments channel permeability and may regulate of smooth muscle cell to endothelial cell communication. Post-translationally, acetylated in the developing cortex; leading to delocalization from the cell membrane. Expressed at intercalated disks in the heart (at protein level). Expressed in the fetal cochlea.

It localises to the cell membrane. It is found in the cell junction. Its subcellular location is the gap junction. The protein resides in the endoplasmic reticulum. Gap junction protein that acts as a regulator of bladder capacity. A gap junction consists of a cluster of closely packed pairs of transmembrane channels, the connexons, through which materials of low MW diffuse from one cell to a neighboring cell. May play a critical role in the physiology of hearing by participating in the recycling of potassium to the cochlear endolymph. Negative regulator of bladder functional capacity: acts by enhancing intercellular electrical and chemical transmission, thus sensitizing bladder muscles to cholinergic neural stimuli and causing them to contract. May play a role in cell growth inhibition through the regulation of NOV expression and localization. Plays an essential role in gap junction communication in the ventricles. This is Gap junction alpha-1 protein (GJA1) from Homo sapiens (Human).